A 327-amino-acid chain; its full sequence is Sphingomyelin synthase-related 2 (327 aa).

The next 5 helical transmembrane spans lie at 54-74, 99-119, 131-151, 192-212, and 220-240; these read LLATAMVGVGWLSNEVALAWV, AIRIAEYIMMILLISALLVMF, VFFCIAMAYSFRALCVTIFQV, LCGDLIVSGHTLTIFTAFLVF, and LQPLSHIYHVLAFTALFSILL. The active site involves His201. Topologically, residues 241–327 are cytoplasmic; sequence ARKHYMIDIV…TLKKSRRSFE (87 aa). Residues His244 and Asp248 contribute to the active site.

It belongs to the sphingomyelin synthase family.

The protein localises to the membrane. The chain is Sphingomyelin synthase-related 2 from Caenorhabditis elegans.